Consider the following 179-residue polypeptide: MTLKNRYKESIRPKLLKDLGLKNIHQVPKVVKVNVNRGLGEAASNSKALEASLNEMATITGQKALVTRAKKAIAGFKIREGMPIGCTVTLRGDRMYSFLERFINLALPRIRDFRGVNPKSFDGRGNYTVGVKEQLIFPEISFDKIDSIRGMDITIVTSARSDQEGKALLQELGMPFSKN.

The protein belongs to the universal ribosomal protein uL5 family. Part of the 50S ribosomal subunit; part of the 5S rRNA/L5/L18/L25 subcomplex. Contacts the 5S rRNA and the P site tRNA. Forms a bridge to the 30S subunit in the 70S ribosome.

This is one of the proteins that bind and probably mediate the attachment of the 5S RNA into the large ribosomal subunit, where it forms part of the central protuberance. In the 70S ribosome it contacts protein S13 of the 30S subunit (bridge B1b), connecting the 2 subunits; this bridge is implicated in subunit movement. Contacts the P site tRNA; the 5S rRNA and some of its associated proteins might help stabilize positioning of ribosome-bound tRNAs. The chain is Large ribosomal subunit protein uL5 from Prochlorococcus marinus (strain MIT 9301).